The chain runs to 153 residues: Cytochrome c-type biogenesis protein CcmE (153 aa).

At 1–8 (MTTRRGRR) the chain is on the cytoplasmic side. Residues 9–29 (ALLIAGGVGLLALAAALVLNA) form a helical; Signal-anchor for type II membrane protein membrane-spanning segment. Residues 30-153 (LRSNLVFFFS…PSATLQTEAR (124 aa)) are Periplasmic-facing. H124 and Y128 together coordinate heme.

It belongs to the CcmE/CycJ family.

Its subcellular location is the cell inner membrane. In terms of biological role, heme chaperone required for the biogenesis of c-type cytochromes. Transiently binds heme delivered by CcmC and transfers the heme to apo-cytochromes in a process facilitated by CcmF and CcmH. In Bordetella parapertussis (strain 12822 / ATCC BAA-587 / NCTC 13253), this protein is Cytochrome c-type biogenesis protein CcmE.